Consider the following 147-residue polypeptide: Large ribosomal subunit protein bL9 (147 aa).

Belongs to the bacterial ribosomal protein bL9 family.

Functionally, binds to the 23S rRNA. The polypeptide is Large ribosomal subunit protein bL9 (Nitratiruptor sp. (strain SB155-2)).